A 391-amino-acid chain; its full sequence is Somatostatin receptor type 1 (391 aa).

A disordered region spans residues 1-50; it reads MFPNGTAPSPTSSPSSSPGGCGEGVCSRGPGSGAADGMEEPGRNSSQNGT. Residues 1–56 are Extracellular-facing; that stretch reads MFPNGTAPSPTSSPSSSPGGCGEGVCSRGPGSGAADGMEEPGRNSSQNGTLSEGQG. N-linked (GlcNAc...) asparagine glycosylation occurs at N4. Residues 8–18 show a composition bias toward low complexity; sequence PSPTSSPSSSP. N-linked (GlcNAc...) asparagine glycans are attached at residues N44 and N48. Residues 57 to 84 traverse the membrane as a helical segment; sequence SAILISFIYSVVCLVGLCGNSMVIYVIL. Residues 85–94 lie on the Cytoplasmic side of the membrane; sequence RYAKMKTATN. The chain crosses the membrane as a helical span at residues 95–120; that stretch reads IYILNLAIADELLMLSVPFLVTSTLL. At 121–131 the chain is on the extracellular side; it reads RHWPFGALLCR. A disulfide bond links C130 and C208. A helical transmembrane segment spans residues 132 to 153; that stretch reads LVLSVDAVNMFTSIYCLTVLSV. Residues 154-175 lie on the Cytoplasmic side of the membrane; the sequence is DRYVAVVHPIKAARYRRPTVAK. A helical transmembrane segment spans residues 176–196; that stretch reads VVNLGVWVLSLLVILPIVVFS. The Extracellular segment spans residues 197-219; it reads RTAANSDGTVACNMLMPEPAQRW. Residues 220–244 traverse the membrane as a helical segment; sequence LVGFVLYTFLMGFLLPVGAICLCYV. The Cytoplasmic segment spans residues 245 to 270; sequence LIIAKMRMVALKAGWQQRKRSERKIT. The helical transmembrane segment at 271–296 threads the bilayer; the sequence is LMVMMVVMVFVICWMPFYVVQLVNVF. At 297-303 the chain is on the extracellular side; sequence AEQDDAT. The helical transmembrane segment at 304–327 threads the bilayer; the sequence is VSQLSVILGYANSCANPILYGFLS. Residues 328–391 lie on the Cytoplasmic side of the membrane; it reads DNFKRSFQRI…GTCASRISTL (64 aa). A lipid anchor (S-palmitoyl cysteine) is attached at C339.

It belongs to the G-protein coupled receptor 1 family. As to expression, brain, pituitary, islet, jejunum, stomach, heart, spleen.

The protein resides in the cell membrane. Functionally, receptor for somatostatin with higher affinity for somatostatin-14 than -28. This receptor is coupled to phosphotyrosine phosphatase and Na(+)/H(+) exchanger via pertussis toxin insensitive G proteins. The polypeptide is Somatostatin receptor type 1 (Sstr1) (Rattus norvegicus (Rat)).